A 295-amino-acid chain; its full sequence is Bifunctional protein FolD (295 aa).

NADP(+) contacts are provided by residues glycine 165–glycine 167, serine 192, and isoleucine 233.

This sequence belongs to the tetrahydrofolate dehydrogenase/cyclohydrolase family. Homodimer.

The catalysed reaction is (6R)-5,10-methylene-5,6,7,8-tetrahydrofolate + NADP(+) = (6R)-5,10-methenyltetrahydrofolate + NADPH. The enzyme catalyses (6R)-5,10-methenyltetrahydrofolate + H2O = (6R)-10-formyltetrahydrofolate + H(+). It participates in one-carbon metabolism; tetrahydrofolate interconversion. Functionally, catalyzes the oxidation of 5,10-methylenetetrahydrofolate to 5,10-methenyltetrahydrofolate and then the hydrolysis of 5,10-methenyltetrahydrofolate to 10-formyltetrahydrofolate. The chain is Bifunctional protein FolD from Tropheryma whipplei (strain TW08/27) (Whipple's bacillus).